The following is a 482-amino-acid chain: Bifunctional protein HldE (482 aa).

Residues 1–322 (MFGLESKSPK…QYIHTQPSNL (322 aa)) are ribokinase. 198-201 (NKKE) lines the ATP pocket. Asp-267 is an active-site residue. The interval 350–482 (FTNGCFDILH…IQRSKICKHS (133 aa)) is cytidylyltransferase.

This sequence in the N-terminal section; belongs to the carbohydrate kinase PfkB family. The protein in the C-terminal section; belongs to the cytidylyltransferase family. In terms of assembly, homodimer.

It carries out the reaction D-glycero-beta-D-manno-heptose 7-phosphate + ATP = D-glycero-beta-D-manno-heptose 1,7-bisphosphate + ADP + H(+). The enzyme catalyses D-glycero-beta-D-manno-heptose 1-phosphate + ATP + H(+) = ADP-D-glycero-beta-D-manno-heptose + diphosphate. It participates in nucleotide-sugar biosynthesis; ADP-L-glycero-beta-D-manno-heptose biosynthesis; ADP-L-glycero-beta-D-manno-heptose from D-glycero-beta-D-manno-heptose 7-phosphate: step 1/4. Its pathway is nucleotide-sugar biosynthesis; ADP-L-glycero-beta-D-manno-heptose biosynthesis; ADP-L-glycero-beta-D-manno-heptose from D-glycero-beta-D-manno-heptose 7-phosphate: step 3/4. The protein operates within bacterial outer membrane biogenesis; LPS core biosynthesis. Its function is as follows. Catalyzes the phosphorylation of D-glycero-D-manno-heptose 7-phosphate at the C-1 position to selectively form D-glycero-beta-D-manno-heptose-1,7-bisphosphate. Catalyzes the ADP transfer from ATP to D-glycero-beta-D-manno-heptose 1-phosphate, yielding ADP-D-glycero-beta-D-manno-heptose. This chain is Bifunctional protein HldE, found in Helicobacter hepaticus (strain ATCC 51449 / 3B1).